Here is a 167-residue protein sequence, read N- to C-terminus: HTH-type transcriptional repressor IacR (167 aa).

The segment covering 1–10 (MSNAKNTSAA) has biased composition (polar residues). Positions 1–25 (MSNAKNTSAASPARKGHSHHDPASD) are disordered. The region spanning 30–162 (EDFPFYWLAR…LNRMLEVVFH (133 aa)) is the HTH marR-type domain. The H-T-H motif DNA-binding region spans 76-99 (ISEISTHAIAKLSTITKIVYRMKE).

Exposure to indole-3-acetic acid (IAA) probably relieves the repressor activity. Functionally, probably acts as a repressor of iacA expression. The polypeptide is HTH-type transcriptional repressor IacR (Pseudomonas putida (Arthrobacter siderocapsulatus)).